Reading from the N-terminus, the 142-residue chain is Conidial pigment biosynthesis dehydratase EthD (142 aa).

The EthD domain maps to 25–121; sequence PGMSEAAYRE…PDHQKFADTS (97 aa).

This sequence belongs to the tpcK family.

The protein operates within pigment biosynthesis. In terms of biological role, dehydratase; part of the Pks1 gene cluster that mediates the biosynthesis of an anthraquinone derivative pigment that contributes to conidial pigmentation that provides protection from UV radiation, heat and cold stress. The polyketide synthase Pks1 produces 1-acetyl-2,4,6,8-tetrahydroxy-9,10-anthraquinone though condensation of acetyl-CoA with malonyl-CoA. The dehydratase EthD and the laccase Mlac1 further convert the anthraquinone derivative into the final conidial pigment. This chain is Conidial pigment biosynthesis dehydratase EthD, found in Metarhizium robertsii (strain ARSEF 23 / ATCC MYA-3075) (Metarhizium anisopliae (strain ARSEF 23)).